We begin with the raw amino-acid sequence, 552 residues long: Dihydroxy-acid dehydratase (552 aa).

Asp78 is a Mg(2+) binding site. Cys119 contributes to the [2Fe-2S] cluster binding site. Mg(2+)-binding residues include Asp120 and Lys121. N6-carboxylysine is present on Lys121. A [2Fe-2S] cluster-binding site is contributed by Cys191. Glu442 lines the Mg(2+) pocket. The active-site Proton acceptor is the Ser468.

It belongs to the IlvD/Edd family. Homodimer. [2Fe-2S] cluster serves as cofactor. The cofactor is Mg(2+).

It carries out the reaction (2R)-2,3-dihydroxy-3-methylbutanoate = 3-methyl-2-oxobutanoate + H2O. It catalyses the reaction (2R,3R)-2,3-dihydroxy-3-methylpentanoate = (S)-3-methyl-2-oxopentanoate + H2O. It functions in the pathway amino-acid biosynthesis; L-isoleucine biosynthesis; L-isoleucine from 2-oxobutanoate: step 3/4. It participates in amino-acid biosynthesis; L-valine biosynthesis; L-valine from pyruvate: step 3/4. Its function is as follows. Functions in the biosynthesis of branched-chain amino acids. Catalyzes the dehydration of (2R,3R)-2,3-dihydroxy-3-methylpentanoate (2,3-dihydroxy-3-methylvalerate) into 2-oxo-3-methylpentanoate (2-oxo-3-methylvalerate) and of (2R)-2,3-dihydroxy-3-methylbutanoate (2,3-dihydroxyisovalerate) into 2-oxo-3-methylbutanoate (2-oxoisovalerate), the penultimate precursor to L-isoleucine and L-valine, respectively. This Clostridium botulinum (strain Alaska E43 / Type E3) protein is Dihydroxy-acid dehydratase.